Consider the following 408-residue polypeptide: Apoptosis-inducing factor homolog A (408 aa).

Residues 34–38 (GCGFG), Arg69, and Asp314 each bind FAD.

Belongs to the FAD-dependent oxidoreductase family. It depends on FAD as a cofactor.

Functionally, putative FAD-dependent oxidoreductase. This is Apoptosis-inducing factor homolog A (aifA) from Dictyostelium discoideum (Social amoeba).